A 98-amino-acid polypeptide reads, in one-letter code: N(2)-fixation sustaining protein CowN (98 aa).

It belongs to the CowN family.

In terms of biological role, is required to sustain N(2)-dependent growth in the presence of low levels of carbon monoxide (CO). Probably acts by protecting the N(2) fixation ability of the nitrogenase complex, which is inactivated in the presence of CO. In Paramagnetospirillum magneticum (strain ATCC 700264 / AMB-1) (Magnetospirillum magneticum), this protein is N(2)-fixation sustaining protein CowN.